Here is a 303-residue protein sequence, read N- to C-terminus: MTSRTEAVKAYLLDLQDRICSALETEDGGARFVEDAWVREAGGGGRTRVIGDGKVIEKGGVNFSHVFGAGLPPSASAHRPELAGRGFEALGVSLVIHPYNPHVPTSHANVRFFIAEKEGEEAVWWFGGGFDLTPYYGNEEDCVHWHRVAEQACAPFGADVYPRYKAWCDRYFHLKHRGEPRGIGGLFFDDLNEWDFDTCFAFIRAIGDAYINAYLPIVQRRKDTPYTPQQREFQEYRRGRYVEFNLVYDRGTLFGLQSGGRTESILMSLPPQVRWGYDWKAAPGSEEARLTEYFLQDRDWLGQ.

Residue Ser93 coordinates substrate. Residues His97 and His107 each coordinate a divalent metal cation. His107 (proton donor) is an active-site residue. 109 to 111 (NVR) contributes to the substrate binding site. The a divalent metal cation site is built by His146 and His176. Residues 241 to 276 (YVEFNLVYDRGTLFGLQSGGRTESILMSLPPQVRWG) form an important for dimerization region. 259–261 (GGR) is a substrate binding site.

It belongs to the aerobic coproporphyrinogen-III oxidase family. As to quaternary structure, homodimer. A divalent metal cation serves as cofactor.

The protein localises to the cytoplasm. The catalysed reaction is coproporphyrinogen III + O2 + 2 H(+) = protoporphyrinogen IX + 2 CO2 + 2 H2O. It participates in porphyrin-containing compound metabolism; protoporphyrin-IX biosynthesis; protoporphyrinogen-IX from coproporphyrinogen-III (O2 route): step 1/1. In terms of biological role, involved in the heme biosynthesis. Catalyzes the aerobic oxidative decarboxylation of propionate groups of rings A and B of coproporphyrinogen-III to yield the vinyl groups in protoporphyrinogen-IX. This chain is Oxygen-dependent coproporphyrinogen-III oxidase, found in Pseudomonas putida (strain ATCC 700007 / DSM 6899 / JCM 31910 / BCRC 17059 / LMG 24140 / F1).